We begin with the raw amino-acid sequence, 134 residues long: UPF0102 protein SYNW1051 (134 aa).

Belongs to the UPF0102 family.

This Parasynechococcus marenigrum (strain WH8102) protein is UPF0102 protein SYNW1051.